The sequence spans 837 residues: Phosphatidylethanolamine N-methyltransferase (837 aa).

Residues 1-36 lie on the Lumenal side of the membrane; the sequence is MASDVVARTRSSGVTFTPPTTHDMVRSLFDPTVRKS. The chain crosses the membrane as a helical span at residues 37–57; the sequence is FLEICITLALLSDFVFCYWGL. Topologically, residues 58 to 67 are cytoplasmic; that stretch reads QRFGLTSMKK. A helical membrane pass occupies residues 68–88; that stretch reads AFLAQYLFWRLCYNLGIGVAL. The Lumenal portion of the chain corresponds to 89 to 148; that stretch reads HLQSRYETWTNYAKRNHVFTKGNHTPLARFCQFELKTKMSEGYDMYSQPEELNVWLLFRQ. A helical membrane pass occupies residues 149–169; it reads FVDLILMQDFCTYMIYVYLSL. Over 170–173 the chain is Cytoplasmic; it reads PAQW. The chain crosses the membrane as a helical span at residues 174–194; the sequence is SAMLNWRTGLGVSMILFNIWV. Residues 195–205 lie on the Lumenal side of the membrane; that stretch reads KVDAHRVVKDY. Residues 206–226 form a helical membrane-spanning segment; the sequence is AWYWGDFFFLQESELVFDGVF. The Cytoplasmic segment spans residues 227–235; it reads NISPHPMYS. The chain crosses the membrane as a helical span at residues 236 to 256; the sequence is IGYMGYYGLSLICGNYHVLLV. The Lumenal portion of the chain corresponds to 257–322; the sequence is SISGHLLQFL…SGFWVNNFDK (66 aa). A helical membrane pass occupies residues 323–343; sequence LRFTDYFTVGTSLALICWLFL. At 344-349 the chain is on the cytoplasmic side; that stretch reads ERPSVK. A helical membrane pass occupies residues 350 to 370; the sequence is LLFNLTFFTKFVTSIVVCSIL. Over 371-396 the chain is Lumenal; it reads YLQSSQKWFTKLYLKNGYTQVYSYQQ. Residues 397–417 traverse the membrane as a helical segment; the sequence is WQFIYNFSSCLTYTLLFIQTL. Over 418-424 the chain is Cytoplasmic; the sequence is AKLFDDN. The helical transmembrane segment at 425–445 threads the bilayer; that stretch reads TYIEYTQFIFGLLLCAVQTWC. At 446-505 the chain is on the lumenal side; that stretch reads NAEIRSAISDFGWFYGDFFLSNYIPTKSLTSHGIYRYLNNPETILGVAGVWGTVLMTDFS. Residues 506–526 traverse the membrane as a helical segment; it reads WENIALACLWSGCNFIIVKFI. Over 527–837 the chain is Cytoplasmic; sequence EQPHMAKLYG…HIKKVLDDLE (311 aa).

It belongs to the class VI-like SAM-binding methyltransferase superfamily. CHO2 family.

Its subcellular location is the endoplasmic reticulum membrane. The catalysed reaction is a 1,2-diacyl-sn-glycero-3-phosphoethanolamine + S-adenosyl-L-methionine = a 1,2-diacyl-sn-glycero-3-phospho-N-methylethanolamine + S-adenosyl-L-homocysteine + H(+). It participates in phospholipid metabolism; phosphatidylcholine biosynthesis. Its function is as follows. Catalyzes the first step of the methylation pathway of phosphatidylcholine biosynthesis, the SAM-dependent methylation of phosphatidylethanolamine (PE) to phosphatidylmonomethylethanolamine (PMME). This is Phosphatidylethanolamine N-methyltransferase (CHO2) from Zygosaccharomyces rouxii (strain ATCC 2623 / CBS 732 / NBRC 1130 / NCYC 568 / NRRL Y-229).